Reading from the N-terminus, the 400-residue chain is CCA-adding enzyme (400 aa).

2 residues coordinate ATP: glycine 27 and arginine 30. 2 residues coordinate CTP: glycine 27 and arginine 30. The Mg(2+) site is built by aspartate 40 and aspartate 42. ATP is bound by residues arginine 111, aspartate 154, arginine 157, arginine 160, and arginine 163. The CTP site is built by arginine 111, aspartate 154, arginine 157, arginine 160, and arginine 163.

The protein belongs to the tRNA nucleotidyltransferase/poly(A) polymerase family. Bacterial CCA-adding enzyme type 3 subfamily. As to quaternary structure, homodimer. Mg(2+) serves as cofactor.

The enzyme catalyses a tRNA precursor + 2 CTP + ATP = a tRNA with a 3' CCA end + 3 diphosphate. The catalysed reaction is a tRNA with a 3' CCA end + 2 CTP + ATP = a tRNA with a 3' CCACCA end + 3 diphosphate. Catalyzes the addition and repair of the essential 3'-terminal CCA sequence in tRNAs without using a nucleic acid template. Adds these three nucleotides in the order of C, C, and A to the tRNA nucleotide-73, using CTP and ATP as substrates and producing inorganic pyrophosphate. tRNA 3'-terminal CCA addition is required both for tRNA processing and repair. Also involved in tRNA surveillance by mediating tandem CCA addition to generate a CCACCA at the 3' terminus of unstable tRNAs. While stable tRNAs receive only 3'-terminal CCA, unstable tRNAs are marked with CCACCA and rapidly degraded. This is CCA-adding enzyme from Bacillus pumilus (strain SAFR-032).